A 270-amino-acid polypeptide reads, in one-letter code: MTQNTVIVNGVAMASRPSQPTHVNVHIHQESALTQLLKAGGSLKKFLFHPGDTVPSTARIGYEQLALGVTQILLGVVSCVLGVCLSLGPWTVLSASGCAFWAGSVVIAAGAGAIVHEKHPGKLAGYISSLLTLAGFATAMAAVVLCVNSFIWQTEPFLYIDTVCDRSDPVFPTTGYRWMRRSQENQWQKEECRAYMQMLRKLFTAIRALFLAVCVLKVIVSLVSLGVGLRNLCGQSSQPLNEEGSEKRLLGENSVPPSPSREQTSTAIVL.

A run of 4 helical transmembrane segments spans residues 65–85, 95–115, 127–147, and 209–229; these read LALGVTQILLGVVSCVLGVCL, ASGCAFWAGSVVIAAGAGAIV, ISSLLTLAGFATAMAAVVLCV, and LFLAVCVLKVIVSLVSLGVGL. Residues Ser-236, Ser-245, Ser-254, and Ser-258 each carry the phosphoserine modification. The tract at residues 237 to 270 is disordered; it reads SQPLNEEGSEKRLLGENSVPPSPSREQTSTAIVL. Residues 260–270 show a composition bias toward polar residues; that stretch reads SREQTSTAIVL.

Belongs to the TMEM176 family. In terms of tissue distribution, expressed in lung and dermal fibroblasts.

The protein localises to the nucleus membrane. In terms of biological role, may play a role in the process of maturation of dendritic cells. Required for the development of cerebellar granule cells. The polypeptide is Transmembrane protein 176B (TMEM176B) (Homo sapiens (Human)).